The chain runs to 192 residues: uncharacterized protein (192 aa).

The Nudix hydrolase domain maps to 29 to 160 (HRQAAVLIPI…PLDIYRRGDS (132 aa)). Residues 67 to 89 (GAVDDTDASVIAAALREAEEEVA) carry the Nudix box motif. Mg(2+)-binding residues include glutamate 83 and glutamate 87.

Belongs to the Nudix hydrolase family. PCD1 subfamily. Mn(2+) is required as a cofactor. Mg(2+) serves as cofactor.

Its function is as follows. Probably mediates the hydrolysis of some nucleoside diphosphate derivatives. This is an uncharacterized protein from Shigella boydii serotype 4 (strain Sb227).